The chain runs to 214 residues: Orotate phosphoribosyltransferase (214 aa).

Position 26 (K26) interacts with 5-phospho-alpha-D-ribose 1-diphosphate. 34–35 (FF) is an orotate binding site. 5-phospho-alpha-D-ribose 1-diphosphate contacts are provided by residues 72–73 (YK), R99, K100, K103, H105, and 124–132 (DDVITAGTA). 2 residues coordinate orotate: T128 and R157.

It belongs to the purine/pyrimidine phosphoribosyltransferase family. PyrE subfamily. As to quaternary structure, homodimer. Mg(2+) serves as cofactor.

The catalysed reaction is orotidine 5'-phosphate + diphosphate = orotate + 5-phospho-alpha-D-ribose 1-diphosphate. It functions in the pathway pyrimidine metabolism; UMP biosynthesis via de novo pathway; UMP from orotate: step 1/2. Its function is as follows. Catalyzes the transfer of a ribosyl phosphate group from 5-phosphoribose 1-diphosphate to orotate, leading to the formation of orotidine monophosphate (OMP). In Pseudomonas fluorescens (strain SBW25), this protein is Orotate phosphoribosyltransferase.